Here is a 128-residue protein sequence, read N- to C-terminus: Dehydrin Xero 1 (128 aa).

Residues 1 to 19 (MESYQNQSGAQQTHQQLDQ) are compositionally biased toward polar residues. Residues 1–128 (MESYQNQSGA…IKEKLPGGHH (128 aa)) are disordered. Composition is skewed to low complexity over residues 23-41 (PFPA…PAVA) and 48-60 (GMLH…SSSS). Positions 75–91 (GITEKIKEKLPGHHDSN) are enriched in basic and acidic residues. The segment covering 92–104 (KTSSLGSTTTAYD) has biased composition (polar residues). Positions 107–128 (TVHHEKKGMMEKIKEKLPGGHH) are enriched in basic and acidic residues.

The protein belongs to the plant dehydrin family.

This Arabidopsis thaliana (Mouse-ear cress) protein is Dehydrin Xero 1 (XERO1).